A 198-amino-acid polypeptide reads, in one-letter code: Pyridoxal 5'-phosphate synthase subunit PdxT (198 aa).

49 to 51 (GES) provides a ligand contact to L-glutamine. The active-site Nucleophile is the C81. Residues R113 and 141-142 (IR) contribute to the L-glutamine site. Active-site charge relay system residues include H177 and E179.

It belongs to the glutaminase PdxT/SNO family. As to quaternary structure, in the presence of PdxS, forms a dodecamer of heterodimers. Only shows activity in the heterodimer.

It carries out the reaction aldehydo-D-ribose 5-phosphate + D-glyceraldehyde 3-phosphate + L-glutamine = pyridoxal 5'-phosphate + L-glutamate + phosphate + 3 H2O + H(+). It catalyses the reaction L-glutamine + H2O = L-glutamate + NH4(+). It functions in the pathway cofactor biosynthesis; pyridoxal 5'-phosphate biosynthesis. In terms of biological role, catalyzes the hydrolysis of glutamine to glutamate and ammonia as part of the biosynthesis of pyridoxal 5'-phosphate. The resulting ammonia molecule is channeled to the active site of PdxS. In Mycobacterium tuberculosis (strain ATCC 25177 / H37Ra), this protein is Pyridoxal 5'-phosphate synthase subunit PdxT.